Consider the following 84-residue polypeptide: Large ribosomal subunit protein bL27 (84 aa).

The segment at 1–21 is disordered; it reads MAHKKGGGSTKNGRDSNPQYL.

The protein belongs to the bacterial ribosomal protein bL27 family.

In Chloroherpeton thalassium (strain ATCC 35110 / GB-78), this protein is Large ribosomal subunit protein bL27.